The following is a 126-amino-acid chain: MAIVGIGTDIVEIARISEQRERLGDRLARRVLTEPELATYMQSKQPERFLAKRFAAKEAAAKALGTGIGRGVSFQHIHIDNDANGAPQVRFTDGALARLEQLAGKHGFISIADEKHYAVATVVLES.

Mg(2+) contacts are provided by D9 and E58.

The protein belongs to the P-Pant transferase superfamily. AcpS family. Mg(2+) is required as a cofactor.

The protein resides in the cytoplasm. It catalyses the reaction apo-[ACP] + CoA = holo-[ACP] + adenosine 3',5'-bisphosphate + H(+). Its function is as follows. Transfers the 4'-phosphopantetheine moiety from coenzyme A to a Ser of acyl-carrier-protein. This chain is Holo-[acyl-carrier-protein] synthase, found in Shewanella frigidimarina (strain NCIMB 400).